Here is an 82-residue protein sequence, read N- to C-terminus: Toxin Tpa7 (82 aa).

An N-terminal signal peptide occupies residues 1 to 20 (MKGMILLISCLMLIEVVVEC). The LCN-type CS-alpha/beta domain maps to 21–82 (KEGYPLDTLN…KIWDLKKNKC (62 aa)). Cystine bridges form between Cys-32–Cys-82, Cys-36–Cys-58, Cys-44–Cys-63, and Cys-48–Cys-65.

It belongs to the long (4 C-C) scorpion toxin superfamily. Sodium channel inhibitor family. Beta subfamily. In terms of tissue distribution, expressed by the venom gland.

The protein localises to the secreted. Its function is as follows. Beta toxins bind voltage-independently at site-4 of sodium channels (Nav) and shift the voltage of activation toward more negative potentials thereby affecting sodium channel activation and promoting spontaneous and repetitive firing. The polypeptide is Toxin Tpa7 (Tityus pachyurus (Colombian scorpion)).